We begin with the raw amino-acid sequence, 221 residues long: Ribonuclease P protein subunit p29 (221 aa).

S10 carries the phosphoserine modification.

The protein belongs to the eukaryotic/archaeal RNase P protein component 1 family. Component of nuclear RNase P and RNase MRP ribonucleoproteins. RNase P consists of a catalytic RNA moiety and 10 different protein chains; POP1, POP4, POP5, POP7, RPP14, RPP21, RPP25, RPP30, RPP38 and RPP40. Within the RNase P complex, POP1, POP7 and RPP25 form the 'finger' subcomplex, POP5, RPP14, RPP40 and homodimeric RPP30 form the 'palm' subcomplex, and RPP21, POP4 and RPP38 form the 'wrist' subcomplex. All subunits of the RNase P complex interact with the catalytic RNA. Several subunits of RNase P are also part of the RNase MRP complex. RNase MRP consists of a catalytic RNA moiety and about 8 protein subunits; POP1, POP7, RPP25, RPP30, RPP38, RPP40 and possibly also POP4 and POP5.

Its subcellular location is the nucleus. The protein resides in the nucleolus. Component of ribonuclease P, a ribonucleoprotein complex that generates mature tRNA molecules by cleaving their 5'-ends. In Rattus norvegicus (Rat), this protein is Ribonuclease P protein subunit p29 (Pop4).